A 252-amino-acid polypeptide reads, in one-letter code: Hydroxyacylglutathione hydrolase (252 aa).

Zn(2+)-binding residues include His52, His54, Asp56, His57, His107, Asp128, and His166.

It belongs to the metallo-beta-lactamase superfamily. Glyoxalase II family. Monomer. It depends on Zn(2+) as a cofactor.

The enzyme catalyses an S-(2-hydroxyacyl)glutathione + H2O = a 2-hydroxy carboxylate + glutathione + H(+). Its pathway is secondary metabolite metabolism; methylglyoxal degradation; (R)-lactate from methylglyoxal: step 2/2. Its function is as follows. Thiolesterase that catalyzes the hydrolysis of S-D-lactoyl-glutathione to form glutathione and D-lactic acid. In Neisseria meningitidis serogroup C (strain 053442), this protein is Hydroxyacylglutathione hydrolase.